Reading from the N-terminus, the 360-residue chain is Chorismate synthase (360 aa).

Arg-48 lines the NADP(+) pocket. FMN-binding positions include 125 to 127 (RSS), 242 to 243 (NA), Gly-286, 301 to 305 (KPTSS), and Arg-327.

It belongs to the chorismate synthase family. Homotetramer. FMNH2 is required as a cofactor.

It catalyses the reaction 5-O-(1-carboxyvinyl)-3-phosphoshikimate = chorismate + phosphate. The protein operates within metabolic intermediate biosynthesis; chorismate biosynthesis; chorismate from D-erythrose 4-phosphate and phosphoenolpyruvate: step 7/7. Its function is as follows. Catalyzes the anti-1,4-elimination of the C-3 phosphate and the C-6 proR hydrogen from 5-enolpyruvylshikimate-3-phosphate (EPSP) to yield chorismate, which is the branch point compound that serves as the starting substrate for the three terminal pathways of aromatic amino acid biosynthesis. This reaction introduces a second double bond into the aromatic ring system. The protein is Chorismate synthase of Pelagibacter ubique (strain HTCC1062).